The sequence spans 203 residues: Thymidylate kinase (203 aa).

10-17 (GVEGSGKT) contacts ATP.

The protein belongs to the thymidylate kinase family.

It carries out the reaction dTMP + ATP = dTDP + ADP. Phosphorylation of dTMP to form dTDP in both de novo and salvage pathways of dTTP synthesis. The protein is Thymidylate kinase of Carboxydothermus hydrogenoformans (strain ATCC BAA-161 / DSM 6008 / Z-2901).